A 264-amino-acid chain; its full sequence is Meiotic recombination protein REC102 (264 aa).

Residues 200-221 (LKWQQSSLAPISYALTSNSVLL) form a leucine-zipper region.

This sequence belongs to the TOP6B-like family. As to quaternary structure, interacts with REC104; seems to form a functional unit with REC104. REC102-REC104 interacts with SKI8-SPO11 and this interaction is required for proper subcellular location of the proteins during the initiation of recombination. Interacts with MEI4, REC114 and SPO11.

It is found in the nucleus. Its function is as follows. Required for formation of the SPO11-mediated double-strand breaks (DSBs) that initiate meiotic recombination. May mediate the interaction between SPO11 subunits during meiosis. Also needed for homolog chromosome pairing, synaptonemal complex formation, and for the proper timing of the first meiotic division. Not required for mitosis and mitotic DNA repair mechanisms. In Saccharomyces cerevisiae (strain RM11-1a) (Baker's yeast), this protein is Meiotic recombination protein REC102 (REC102).